We begin with the raw amino-acid sequence, 234 residues long: RNA-binding protein pno1 (234 aa).

The interval 1 to 39 is disordered; the sequence is MPTQDSAAKQADDGFQLVQKKSRKRKMTMDMDDADPKAG. The KH domain occupies 158 to 207; that stretch reads LARCIGRLAGKGGRTKFTIENVTKTRIVLADSKVHILGSYQNIRAARTAL.

This sequence belongs to the PNO1 family.

The protein localises to the nucleus. It localises to the nucleolus. This Ixodes scapularis (Black-legged tick) protein is RNA-binding protein pno1.